The sequence spans 312 residues: tRNA U34 carboxymethyltransferase (312 aa).

Carboxy-S-adenosyl-L-methionine is bound by residues Lys-88, Trp-102, Lys-107, Gly-127, 149 to 151 (DPS), 177 to 178 (LD), Met-191, Tyr-195, and Arg-304.

The protein belongs to the class I-like SAM-binding methyltransferase superfamily. CmoB family. In terms of assembly, homotetramer.

It catalyses the reaction carboxy-S-adenosyl-L-methionine + 5-hydroxyuridine(34) in tRNA = 5-carboxymethoxyuridine(34) in tRNA + S-adenosyl-L-homocysteine + H(+). Its function is as follows. Catalyzes carboxymethyl transfer from carboxy-S-adenosyl-L-methionine (Cx-SAM) to 5-hydroxyuridine (ho5U) to form 5-carboxymethoxyuridine (cmo5U) at position 34 in tRNAs. The sequence is that of tRNA U34 carboxymethyltransferase from Dichelobacter nodosus (strain VCS1703A).